The chain runs to 232 residues: Clarin-2 (232 aa).

Residues 10 to 30 (YGLASLLSFSSFILIIVALVV) traverse the membrane as a helical segment. An N-linked (GlcNAc...) asparagine glycan is attached at asparagine 48. The next 3 membrane-spanning stretches (helical) occupy residues 101–121 (ILLL…FAIL), 139–159 (LWNV…VAAV), and 188–208 (SFWI…VVAI).

It belongs to the clarin family.

It is found in the cell projection. Its subcellular location is the stereocilium membrane. Its function is as follows. Plays a key role to hearing function. Required for normal organization and maintenance of the stereocilia bundle and for mechano-electrical transduction. The polypeptide is Clarin-2 (Homo sapiens (Human)).